A 331-amino-acid polypeptide reads, in one-letter code: Polyprenyl transferase mpaA' (331 aa).

8 consecutive transmembrane segments (helical) span residues 27-47, 56-76, 127-147, 159-179, 190-210, 240-260, 264-284, and 295-315; these read MPYYTMMAAVWATFIAGALKL, IEFILYKAGLCFVHCLLLCGA, LILDGRNIWTLMLPLTASIML, VFVYPQYILGLAIGYPAITGW, GDIIKHCIPICLLVFFWCVYF, LFLAFLSVLPLLTIPYIISTI, WLWVSWMATWTVSIVMQIAQF, and IHWDNFLLGLWTIVACMVEVG.

It belongs to the UbiA prenyltransferase family. Requires Mg(2+) as cofactor.

It is found in the golgi apparatus membrane. It carries out the reaction 5,7-dihydroxy-4-methylphthalide + (2E,6E)-farnesyl diphosphate = 4-farnesyl-3,5-dihydroxy-6-methylphthalide + diphosphate. Its pathway is secondary metabolite biosynthesis; terpenoid biosynthesis. Its function is as follows. Polyprenyl transferase; part of the gene cluster that mediates the biosynthesis of mycophenolic acid (MPA), the first isolated antibiotic natural product in the world obtained from a culture of Penicillium brevicompactum in 1893. MpaA' is a Golgi apparatus-associated enzyme that catalyzes the prenylation of 5,7-dihydroxy-4,6-dimethylphthalide (DHMP) to yield farnesyl-DHMP (FDHMP). The first step of the pathway is the synthesis of 5-methylorsellinic acid (5MOA) by the cytosolic polyketide synthase mpaC. 5MOA is then converted to the phthalide compound 5,7-dihydroxy-4,6-dimethylphthalide (DHMP) by the endoplasmic reticulum-bound cytochrome P450 monooxygenase mpaDE. MpaDE first catalyzes hydroxylation of 5-MOA to 4,6-dihydroxy-2-(hydroxymethyl)-3-methylbenzoic acid (DHMB). MpaDE then acts as a lactone synthase that catalyzes the ring closure to convert DHMB into DHMP. The next step is the prenylation of DHMP by the Golgi apparatus-associated prenyltransferase mpaA to yield farnesyl-DHMP (FDHMP). The ER-bound oxygenase mpaB then mediates the oxidative cleavage the C19-C20 double bond in FDHMP to yield FDHMP-3C via a mycophenolic aldehyde intermediate. The O-methyltransferase mpaG catalyzes the methylation of FDHMP-3C to yield MFDHMP-3C. After the cytosolic methylation of FDHMP-3C, MFDHMP-3C enters into peroxisomes probably via free diffusion due to its low molecular weight. Upon a peroxisomal CoA ligation reaction, catalyzed by a beta-oxidation component enzyme acyl-CoA ligase ACL891, MFDHMP-3C-CoA would then be restricted to peroxisomes for the following beta-oxidation pathway steps. The peroxisomal beta-oxidation machinery than converts MFDHMP-3C-CoA into MPA_CoA, via a beta-oxidation chain-shortening process. Finally mpaH acts as a peroxisomal acyl-CoA hydrolase with high substrate specificity toward MPA-CoA to release the final product MPA. The protein is Polyprenyl transferase mpaA' of Penicillium brevicompactum.